We begin with the raw amino-acid sequence, 343 residues long: Diterpene cyclase DtcycB (343 aa).

The Mg(2+) site is built by asparagine 219, serine 223, and glutamate 227.

The protein belongs to the terpene synthase family. In terms of assembly, homodimer. Mg(2+) is required as a cofactor.

The enzyme catalyses (2E,6E,10E)-geranylgeranyl diphosphate + H2O = (R)-nephthenol + diphosphate. It catalyses the reaction (2E,6E,10E)-geranylgeranyl diphosphate = (R)-cembrene A + diphosphate. The catalysed reaction is (2E,6E,10E)-geranylgeranyl diphosphate + H2O = (1S,4E,8E,12E)-2,2,5,9,13-pentamethylcyclopentadeca-4,8,12-trien-1-ol + diphosphate. Functionally, diterpene cyclases that can form multiple diterpene products. This Streptomyces sp protein is Diterpene cyclase DtcycB.